A 194-amino-acid chain; its full sequence is Large ribosomal subunit protein bL9 (194 aa).

Residues 167–194 (EDRAAEAEAASDMAAGGAGSFEGDHYES) are disordered.

This sequence belongs to the bacterial ribosomal protein bL9 family.

Its function is as follows. Binds to the 23S rRNA. The chain is Large ribosomal subunit protein bL9 from Caulobacter sp. (strain K31).